Here is a 465-residue protein sequence, read N- to C-terminus: D-ornithine/D-lysine decarboxylase (465 aa).

K80 carries the N6-(pyridoxal phosphate)lysine modification. Residues G259 and 307–310 (EPGR) contribute to the pyridoxal 5'-phosphate site. C387 serves as the catalytic Proton donor. Pyridoxal 5'-phosphate is bound at residue Y422.

Belongs to the Orn/Lys/Arg decarboxylase class-II family. In terms of assembly, homodimer. The cofactor is pyridoxal 5'-phosphate.

It catalyses the reaction D-ornithine + H(+) = putrescine + CO2. It carries out the reaction D-lysine + H(+) = cadaverine + CO2. Catalyzes the decarboxylation of D-ornithine and D-lysine. Ornithine is likely the physiological substrate. Has no detectable diaminopimelate decarboxylase activity in vitro. The sequence is that of D-ornithine/D-lysine decarboxylase from Salmonella typhimurium (strain LT2 / SGSC1412 / ATCC 700720).